We begin with the raw amino-acid sequence, 104 residues long: ATP-dependent Clp protease adapter protein ClpS (104 aa).

The tract at residues 1–20 (MSPDPHEDLGDVLTEPTQKT) is disordered.

The protein belongs to the ClpS family. In terms of assembly, binds to the N-terminal domain of the chaperone ClpA.

Its function is as follows. Involved in the modulation of the specificity of the ClpAP-mediated ATP-dependent protein degradation. The chain is ATP-dependent Clp protease adapter protein ClpS from Desulfatibacillum aliphaticivorans.